Reading from the N-terminus, the 164-residue chain is R-phycoerythrin alpha chain (164 aa).

2 residues coordinate (2R,3E)-phycoerythrobilin: C82 and C139.

It belongs to the phycobiliprotein family. Heterodimer of an alpha and a beta chain. Contains two covalently linked bilin chromophores.

It is found in the plastid. The protein resides in the chloroplast thylakoid membrane. Functionally, light-harvesting photosynthetic bile pigment-protein from the phycobiliprotein complex. The protein is R-phycoerythrin alpha chain (cpeA) of Lophosiphonia boldii (Red alga).